Consider the following 39-residue polypeptide: RapF inhibitor (39 aa).

A propeptide spanning residues M1–A34 is cleaved from the precursor.

Belongs to the Phr family. As to quaternary structure, interacts with RapF and inhibits its interaction with ComA. In terms of processing, contains a predicted signal peptide cleavage site in the N-terminal region, however the propeptide is probably subject to only one processing event, at the N-terminal end of the mature peptide.

The protein localises to the secreted. The protein resides in the cytoplasm. Signaling molecule involved in the regulation of genetic competence development. Secreted during production, but the mature peptide acts intracellularly, indicating that it needs to be imported into the cell to function. Stimulates expression of the genes controlled by ComA, a transcriptional factor that regulates the development of genetic competence. Acts by inhibiting RapF, which regulates the activity of ComA. This is RapF inhibitor (phrF) from Bacillus subtilis (strain 168).